We begin with the raw amino-acid sequence, 381 residues long: Cytochrome b (381 aa).

4 helical membrane-spanning segments follow: residues 34–54 (FGSLLGICLITPILTGVMLAM), 78–99 (WMIRNLHANGASFFFICIYLHI), 114–134 (WNTGIILLLTLMATAFVGYVL), and 179–199 (FFALHFLLPFLIAGISIVHLT). Residues His84 and His98 each contribute to the heme b site. 2 residues coordinate heme b: His183 and His197. Residue His202 coordinates a ubiquinone. A run of 4 helical transmembrane segments spans residues 227–247 (MKDLLGFTLLSLPFLALAFFT), 289–309 (LGGVLALAASVLILFTIPLLH), 321–341 (MSQILFWLLVANLFILTWVGS), and 348–368 (FIIIGQLASLSYFTILLFLFP).

The protein belongs to the cytochrome b family. As to quaternary structure, the cytochrome bc1 complex contains 11 subunits: 3 respiratory subunits (MT-CYB, CYC1 and UQCRFS1), 2 core proteins (UQCRC1 and UQCRC2) and 6 low-molecular weight proteins (UQCRH/QCR6, UQCRB/QCR7, UQCRQ/QCR8, UQCR10/QCR9, UQCR11/QCR10 and a cleavage product of UQCRFS1). This cytochrome bc1 complex then forms a dimer. Heme b is required as a cofactor.

The protein resides in the mitochondrion inner membrane. Functionally, component of the ubiquinol-cytochrome c reductase complex (complex III or cytochrome b-c1 complex) that is part of the mitochondrial respiratory chain. The b-c1 complex mediates electron transfer from ubiquinol to cytochrome c. Contributes to the generation of a proton gradient across the mitochondrial membrane that is then used for ATP synthesis. The chain is Cytochrome b (MT-CYB) from Nothoprocta perdicaria (Chilean tinamou).